Here is a 283-residue protein sequence, read N- to C-terminus: Arsenite methyltransferase (283 aa).

The protein belongs to the methyltransferase superfamily. Arsenite methyltransferase family.

It carries out the reaction arsenic triglutathione + [thioredoxin]-dithiol + S-adenosyl-L-methionine + 2 H2O = methylarsonous acid + [thioredoxin]-disulfide + 3 glutathione + S-adenosyl-L-homocysteine + H(+). The catalysed reaction is arsenic triglutathione + 2 [thioredoxin]-dithiol + 2 S-adenosyl-L-methionine + H2O = dimethylarsinous acid + 2 [thioredoxin]-disulfide + 3 glutathione + 2 S-adenosyl-L-homocysteine + 2 H(+). It catalyses the reaction arsenic triglutathione + 3 [thioredoxin]-dithiol + 3 S-adenosyl-L-methionine = trimethylarsine + 3 [thioredoxin]-disulfide + 3 glutathione + 3 S-adenosyl-L-homocysteine + 3 H(+). Functionally, catalyzes the transfer of a methyl group from AdoMet to arsenite, producing methylated arsenicals. Involved in the conversion of As(III) to a number of di- and trimethylated species, with trimethylarsine as the end product. Reduces the arsenic toxicity in the cell and may contribute to the global arsenic cycling. The sequence is that of Arsenite methyltransferase from Rhodopseudomonas palustris (strain ATCC BAA-98 / CGA009).